The sequence spans 282 residues: DegV domain-containing protein spr1415 (282 aa).

One can recognise a DegV domain in the interval 3-280 (LAVFTDSSAY…AGSIALGYIP (278 aa)). The hexadecanoate site is built by T61 and S94.

May bind long-chain fatty acids, such as palmitate, and may play a role in lipid transport or fatty acid metabolism. This chain is DegV domain-containing protein spr1415, found in Streptococcus pneumoniae (strain ATCC BAA-255 / R6).